Here is a 263-residue protein sequence, read N- to C-terminus: Cytochrome c oxidase subunit 3 (263 aa).

7 consecutive transmembrane segments (helical) span residues 9-29 (PFHM…AMIL), 40-60 (FNMN…IQWW), 84-104 (GMIL…WAFF), 129-149 (IQIP…ITWA), 161-181 (ALQG…LQMY), 198-218 (TFFV…TFLL), and 241-261 (AWYW…IYWW).

This sequence belongs to the cytochrome c oxidase subunit 3 family. Component of the cytochrome c oxidase (complex IV, CIV), a multisubunit enzyme composed of a catalytic core of 3 subunits and several supernumerary subunits. The complex exists as a monomer or a dimer and forms supercomplexes (SCs) in the inner mitochondrial membrane with ubiquinol-cytochrome c oxidoreductase (cytochrome b-c1 complex, complex III, CIII).

It localises to the mitochondrion inner membrane. The catalysed reaction is 4 Fe(II)-[cytochrome c] + O2 + 8 H(+)(in) = 4 Fe(III)-[cytochrome c] + 2 H2O + 4 H(+)(out). Component of the cytochrome c oxidase, the last enzyme in the mitochondrial electron transport chain which drives oxidative phosphorylation. The respiratory chain contains 3 multisubunit complexes succinate dehydrogenase (complex II, CII), ubiquinol-cytochrome c oxidoreductase (cytochrome b-c1 complex, complex III, CIII) and cytochrome c oxidase (complex IV, CIV), that cooperate to transfer electrons derived from NADH and succinate to molecular oxygen, creating an electrochemical gradient over the inner membrane that drives transmembrane transport and the ATP synthase. Cytochrome c oxidase is the component of the respiratory chain that catalyzes the reduction of oxygen to water. Electrons originating from reduced cytochrome c in the intermembrane space (IMS) are transferred via the dinuclear copper A center (CU(A)) of subunit 2 and heme A of subunit 1 to the active site in subunit 1, a binuclear center (BNC) formed by heme A3 and copper B (CU(B)). The BNC reduces molecular oxygen to 2 water molecules using 4 electrons from cytochrome c in the IMS and 4 protons from the mitochondrial matrix. The chain is Cytochrome c oxidase subunit 3 (COIII) from Locusta migratoria (Migratory locust).